A 204-amino-acid polypeptide reads, in one-letter code: Large ribosomal subunit protein eL15 (204 aa).

2 disordered regions span residues 71 to 91 (RKRP…GVNQ) and 159 to 182 (REMR…HYSQ). A compositionally biased stretch (basic residues) spans 159–174 (REMRGKTSAGRKHRGL).

Belongs to the eukaryotic ribosomal protein eL15 family.

The protein is Large ribosomal subunit protein eL15 (RPL15) of Faxonius limosus (Spinycheek crayfish).